A 62-amino-acid polypeptide reads, in one-letter code: Potassium channel toxin alpha-KTx Tx308 (62 aa).

Positions 1–18 are cleaved as a signal peptide; it reads MQKLFIVLLLFCILRLDA. 3 disulfide bridges follow: Cys-28–Cys-46, Cys-33–Cys-59, and Cys-37–Cys-61.

It belongs to the short scorpion toxin superfamily. Potassium channel inhibitor family. Alpha-KTx 23 subfamily. Expressed by the venom gland.

It is found in the secreted. May block potassium channels. The chain is Potassium channel toxin alpha-KTx Tx308 from Buthus israelis (Israeli scorpion).